The following is a 274-amino-acid chain: S-adenosylmethionine decarboxylase proenzyme (274 aa).

Catalysis depends on serine 119, which acts as the Schiff-base intermediate with substrate; via pyruvic acid. The residue at position 119 (serine 119) is a Pyruvic acid (Ser); by autocatalysis. Histidine 124 functions as the Proton acceptor; for processing activity in the catalytic mechanism. Cysteine 147 acts as the Proton donor; for catalytic activity in catalysis.

This sequence belongs to the prokaryotic AdoMetDC family. Type 2 subfamily. In terms of assembly, heterooctamer of four alpha and four beta chains arranged as a tetramer of alpha/beta heterodimers. Pyruvate is required as a cofactor. Is synthesized initially as an inactive proenzyme. Formation of the active enzyme involves a self-maturation process in which the active site pyruvoyl group is generated from an internal serine residue via an autocatalytic post-translational modification. Two non-identical subunits are generated from the proenzyme in this reaction, and the pyruvate is formed at the N-terminus of the alpha chain, which is derived from the carboxyl end of the proenzyme. The post-translation cleavage follows an unusual pathway, termed non-hydrolytic serinolysis, in which the side chain hydroxyl group of the serine supplies its oxygen atom to form the C-terminus of the beta chain, while the remainder of the serine residue undergoes an oxidative deamination to produce ammonia and the pyruvoyl group blocking the N-terminus of the alpha chain.

It carries out the reaction S-adenosyl-L-methionine + H(+) = S-adenosyl 3-(methylsulfanyl)propylamine + CO2. The protein operates within amine and polyamine biosynthesis; S-adenosylmethioninamine biosynthesis; S-adenosylmethioninamine from S-adenosyl-L-methionine: step 1/1. In terms of biological role, catalyzes the decarboxylation of S-adenosylmethionine to S-adenosylmethioninamine (dcAdoMet), the propylamine donor required for the synthesis of the polyamines spermine and spermidine from the diamine putrescine. The protein is S-adenosylmethionine decarboxylase proenzyme of Clostridium acetobutylicum (strain ATCC 824 / DSM 792 / JCM 1419 / IAM 19013 / LMG 5710 / NBRC 13948 / NRRL B-527 / VKM B-1787 / 2291 / W).